The primary structure comprises 128 residues: Large ribosomal subunit protein bL17 (128 aa).

It belongs to the bacterial ribosomal protein bL17 family. As to quaternary structure, part of the 50S ribosomal subunit. Contacts protein L32.

The polypeptide is Large ribosomal subunit protein bL17 (Streptococcus pyogenes serotype M5 (strain Manfredo)).